Consider the following 153-residue polypeptide: Large ribosomal subunit protein uL22 (153 aa).

Belongs to the universal ribosomal protein uL22 family. In terms of assembly, part of the 50S ribosomal subunit.

Functionally, this protein binds specifically to 23S rRNA. It makes multiple contacts with different domains of the 23S rRNA in the assembled 50S subunit and ribosome. In terms of biological role, the globular domain of the protein is located near the polypeptide exit tunnel on the outside of the subunit, while an extended beta-hairpin is found that lines the wall of the exit tunnel in the center of the 70S ribosome. The protein is Large ribosomal subunit protein uL22 of Methanococcus maripaludis (strain C5 / ATCC BAA-1333).